The sequence spans 63 residues: Large ribosomal subunit protein uL29 (63 aa).

Belongs to the universal ribosomal protein uL29 family.

The chain is Large ribosomal subunit protein uL29 from Bacillus cereus (strain ATCC 14579 / DSM 31 / CCUG 7414 / JCM 2152 / NBRC 15305 / NCIMB 9373 / NCTC 2599 / NRRL B-3711).